The sequence spans 374 residues: Alanine racemase (374 aa).

The active-site Proton acceptor; specific for D-alanine is the K35. Position 35 is an N6-(pyridoxal phosphate)lysine (K35). A substrate-binding site is contributed by R130. Residue Y261 is the Proton acceptor; specific for L-alanine of the active site. Position 309 (M309) interacts with substrate.

Belongs to the alanine racemase family. Pyridoxal 5'-phosphate serves as cofactor.

It carries out the reaction L-alanine = D-alanine. It participates in amino-acid biosynthesis; D-alanine biosynthesis; D-alanine from L-alanine: step 1/1. Its function is as follows. Catalyzes the interconversion of L-alanine and D-alanine. May also act on other amino acids. This chain is Alanine racemase (alr), found in Albidiferax ferrireducens (strain ATCC BAA-621 / DSM 15236 / T118) (Rhodoferax ferrireducens).